Here is a 242-residue protein sequence, read N- to C-terminus: Ribosomal RNA small subunit methyltransferase G (242 aa).

Residues glycine 79, phenylalanine 84, 130–131 (AE), and arginine 150 contribute to the S-adenosyl-L-methionine site.

It belongs to the methyltransferase superfamily. RNA methyltransferase RsmG family.

It is found in the cytoplasm. In terms of biological role, specifically methylates the N7 position of a guanine in 16S rRNA. In Levilactobacillus brevis (strain ATCC 367 / BCRC 12310 / CIP 105137 / JCM 1170 / LMG 11437 / NCIMB 947 / NCTC 947) (Lactobacillus brevis), this protein is Ribosomal RNA small subunit methyltransferase G.